The chain runs to 378 residues: Coiled-coil domain-containing protein 74A (378 aa).

3 disordered regions span residues 1 to 52 (MSGA…RNLD), 128 to 211 (GGPS…EEPL), and 301 to 328 (EGSQ…PKVS). Polar residues predominate over residues 34-44 (LRPQSPQLRQS). Residues 47–90 (QKRNLDLEKSLQFLQQQHSEMLAKLHEEIEHLKRENKDLHYKLI) are a coiled coil. Residues 141–151 (RTHRPGGKRGR) show a composition bias toward basic residues. The segment covering 165–182 (DSLSMSSFQSVKSISNSG) has biased composition (polar residues). 2 stretches are compositionally biased toward basic and acidic residues: residues 194–205 (QDSKADVSQKAD) and 314–323 (SFPRDQEATH).

This chain is Coiled-coil domain-containing protein 74A (CCDC74A), found in Homo sapiens (Human).